We begin with the raw amino-acid sequence, 251 residues long: Imidazole glycerol phosphate synthase subunit HisF (251 aa).

Residues D11 and D130 contribute to the active site.

This sequence belongs to the HisA/HisF family. In terms of assembly, heterodimer of HisH and HisF.

The protein localises to the cytoplasm. It catalyses the reaction 5-[(5-phospho-1-deoxy-D-ribulos-1-ylimino)methylamino]-1-(5-phospho-beta-D-ribosyl)imidazole-4-carboxamide + L-glutamine = D-erythro-1-(imidazol-4-yl)glycerol 3-phosphate + 5-amino-1-(5-phospho-beta-D-ribosyl)imidazole-4-carboxamide + L-glutamate + H(+). It participates in amino-acid biosynthesis; L-histidine biosynthesis; L-histidine from 5-phospho-alpha-D-ribose 1-diphosphate: step 5/9. Functionally, IGPS catalyzes the conversion of PRFAR and glutamine to IGP, AICAR and glutamate. The HisF subunit catalyzes the cyclization activity that produces IGP and AICAR from PRFAR using the ammonia provided by the HisH subunit. This is Imidazole glycerol phosphate synthase subunit HisF from Flavobacterium psychrophilum (strain ATCC 49511 / DSM 21280 / CIP 103535 / JIP02/86).